We begin with the raw amino-acid sequence, 359 residues long: Non-classical arabinogalactan protein 31 (359 aa).

A signal peptide spans Met1–Thr24. The disordered stretch occupies residues Thr31–Pro215. Residues His44 to Pro66 are compositionally biased toward basic residues. Pro residues predominate over residues Pro67 to Pro215. 4-hydroxyproline occurs at positions 71, 75, 79, 82, 83, 87, 91, 95, 99, 103, 107, 111, 114, 115, 119, 123, 127, 131, 135, 139, 143, 147, 151, 155, 159, 163, 167, 171, 175, 179, 183, 186, 187, 191, 195, 199, 203, 207, 210, 211, 215, and 219. O-linked (Ara...) hydroxyproline glycans are attached at residues Pro71, Pro75, Pro79, Pro82, Pro83, Pro87, Pro91, Pro95, Pro99, Pro103, Pro107, Pro111, Pro114, Pro115, Pro119, Pro123, Pro127, Pro131, Pro135, Pro139, Pro143, Pro147, Pro151, Pro155, Pro159, Pro163, Pro167, Pro171, Pro175, Pro179, Pro183, Pro186, Pro187, Pro191, Pro195, Pro199, Pro203, Pro207, Pro210, Pro211, Pro215, and Pro219. The stretch at Pro90–Lys109 is repeat 1. 3 consecutive repeat copies span residues Pro122–Lys141, Pro142–Lys161, and Pro162–Lys181. N-linked (GlcNAc...) asparagine glycans are attached at residues Asn226 and Asn269.

Belongs to the non-classical AGP family. Post-translationally, hydroxylated on numerous prolines in the proline-rich region. O-glycosylated on numerous hydroxyprolines in the proline-rich region; noncontiguous hydroxylproline residues are glycosylated with arabinogalactan. In terms of tissue distribution, expressed in vascular bundles of roots, leaves, sepals and stamen filaments, and pistils but not stigma.

Its subcellular location is the secreted. The protein localises to the cell wall. In terms of biological role, proteoglycan that may contribute to the strengthening of cell walls. This Arabidopsis thaliana (Mouse-ear cress) protein is Non-classical arabinogalactan protein 31.